The sequence spans 551 residues: Calcium-dependent protein kinase 13 (551 aa).

Gly-2 carries N-myristoyl glycine lipidation. The tract at residues 15–78 is disordered; the sequence is SFKQTASQRH…APADLGSVLG (64 aa). One can recognise a Protein kinase domain in the interval 88–346; it reads YAMGRKLGQG…AHEVLCHPWI (259 aa). ATP-binding positions include 94-102 and Lys-117; that span reads LGQGQFGTT. Residue Asp-212 is the Proton acceptor of the active site. The interval 352–382 is autoinhibitory domain; sequence APDRPLDPAVLSRIKQFSAMNKLKKMALRVI. EF-hand domains are found at residues 389–424, 425–460, 461–496, and 497–530; these read EEIA…YGST, LKDT…LNKL, EREE…HNMP, and DAFL…GNMG. The Ca(2+) site is built by Asp-402, Asp-404, Ser-406, Glu-413, Asp-438, Asp-440, Ser-442, Thr-444, Glu-449, Asp-474, Asp-476, Ser-478, Tyr-480, Glu-485, Asp-508, Asp-510, Asp-512, Arg-514, and Glu-519.

It belongs to the protein kinase superfamily. Ser/Thr protein kinase family. CDPK subfamily. As to expression, expressed in vascular tissues of crowns and roots, vascular bundles and central cylinder. Expressed in roots, leaf blades, spikelets and developing seeds.

Its subcellular location is the membrane. It carries out the reaction L-seryl-[protein] + ATP = O-phospho-L-seryl-[protein] + ADP + H(+). The catalysed reaction is L-threonyl-[protein] + ATP = O-phospho-L-threonyl-[protein] + ADP + H(+). With respect to regulation, activated by calcium. Autophosphorylation may play an important role in the regulation of the kinase activity. In terms of biological role, may play a role in signal transduction pathways that involve calcium as a second messenger. May function in signal transduction pathways that positively regulate responses to cold, salt and drought stresses. This is Calcium-dependent protein kinase 13 from Oryza sativa subsp. japonica (Rice).